A 518-amino-acid chain; its full sequence is Glutamate--cysteine ligase (518 aa).

The protein belongs to the glutamate--cysteine ligase type 1 family. Type 1 subfamily.

The catalysed reaction is L-cysteine + L-glutamate + ATP = gamma-L-glutamyl-L-cysteine + ADP + phosphate + H(+). The protein operates within sulfur metabolism; glutathione biosynthesis; glutathione from L-cysteine and L-glutamate: step 1/2. The polypeptide is Glutamate--cysteine ligase (Salmonella paratyphi C (strain RKS4594)).